A 352-amino-acid chain; its full sequence is UDP-N-acetylglucosamine--N-acetylmuramyl-(pentapeptide) pyrophosphoryl-undecaprenol N-acetylglucosamine transferase (352 aa).

2 residues coordinate UDP-N-acetyl-alpha-D-glucosamine: Ser-195 and Gln-287.

This sequence belongs to the glycosyltransferase 28 family. MurG subfamily.

It localises to the cell membrane. The enzyme catalyses Mur2Ac(oyl-L-Ala-gamma-D-Glu-L-Lys-D-Ala-D-Ala)-di-trans,octa-cis-undecaprenyl diphosphate + UDP-N-acetyl-alpha-D-glucosamine = beta-D-GlcNAc-(1-&gt;4)-Mur2Ac(oyl-L-Ala-gamma-D-Glu-L-Lys-D-Ala-D-Ala)-di-trans,octa-cis-undecaprenyl diphosphate + UDP + H(+). It participates in cell wall biogenesis; peptidoglycan biosynthesis. Functionally, cell wall formation. Catalyzes the transfer of a GlcNAc subunit on undecaprenyl-pyrophosphoryl-MurNAc-pentapeptide (lipid intermediate I) to form undecaprenyl-pyrophosphoryl-MurNAc-(pentapeptide)GlcNAc (lipid intermediate II). The protein is UDP-N-acetylglucosamine--N-acetylmuramyl-(pentapeptide) pyrophosphoryl-undecaprenol N-acetylglucosamine transferase of Streptococcus pneumoniae (strain CGSP14).